Consider the following 351-residue polypeptide: Photosystem II D2 protein (351 aa).

The chain crosses the membrane as a helical span at residues 39–59 (CAYLAVGGWLTGTTFVTSWYT). A chlorophyll a-binding site is contributed by His116. The chain crosses the membrane as a helical span at residues 123-139 (GFCLRQFEIARLVGLRP). Gln128 and Asn141 together coordinate pheophytin a. The helical transmembrane segment at 151 to 164 (VFVSVFLMYPLGQA) threads the bilayer. His196 contributes to the chlorophyll a binding site. A helical membrane pass occupies residues 206 to 226 (GALLCAIHGATVQNTLFEDGD). His213 and Phe260 together coordinate a plastoquinone. His213 contributes to the Fe cation binding site. Fe cation is bound at residue His267. A helical transmembrane segment spans residues 277–293 (GLWTSAFGIVGLALNLR).

It belongs to the reaction center PufL/M/PsbA/D family. In terms of assembly, PSII is composed of 1 copy each of membrane proteins PsbA, PsbB, PsbC, PsbD, PsbE, PsbF, PsbH, PsbI, PsbJ, PsbK, PsbL, PsbM, PsbT, PsbX, PsbY, PsbZ, Psb30/Ycf12, at least 3 peripheral proteins of the oxygen-evolving complex and a large number of cofactors. It forms dimeric complexes. Requires The D1/D2 heterodimer binds P680, chlorophylls that are the primary electron donor of PSII, and subsequent electron acceptors. It shares a non-heme iron and each subunit binds pheophytin, quinone, additional chlorophylls, carotenoids and lipids. There is also a Cl(-1) ion associated with D1 and D2, which is required for oxygen evolution. The PSII complex binds additional chlorophylls, carotenoids and specific lipids. as cofactor.

It localises to the plastid. The protein localises to the chloroplast thylakoid membrane. The enzyme catalyses 2 a plastoquinone + 4 hnu + 2 H2O = 2 a plastoquinol + O2. In terms of biological role, photosystem II (PSII) is a light-driven water:plastoquinone oxidoreductase that uses light energy to abstract electrons from H(2)O, generating O(2) and a proton gradient subsequently used for ATP formation. It consists of a core antenna complex that captures photons, and an electron transfer chain that converts photonic excitation into a charge separation. The D1/D2 (PsbA/PsbD) reaction center heterodimer binds P680, the primary electron donor of PSII as well as several subsequent electron acceptors. D2 is needed for assembly of a stable PSII complex. The protein is Photosystem II D2 protein of Pyropia yezoensis (Susabi-nori).